A 591-amino-acid polypeptide reads, in one-letter code: Protein enabled homolog (591 aa).

Residues 1–111 enclose the WH1 domain; that stretch reads MSEQSICQAR…SAMMHALEVL (111 aa). The span at 115–136 shows a compositional bias: polar residues; that stretch reads ETGPTLPRQNSQLPAQVQNGPS. The disordered stretch occupies residues 115-146; sequence ETGPTLPRQNSQLPAQVQNGPSQEELEIQRRQ. Ser125 carries the post-translational modification Phosphoserine. Residues 135–265 adopt a coiled-coil conformation; it reads PSQEELEIQR…LEWERERRIS (131 aa). 9 repeat units span residues 156–160, 161–165, 166–170, 171–175, 176–180, 181–185, 186–190, 191–195, and 196–200. Residues 156–200 are 9 X 5 AA tandem repeats of [LMQ]-E-[QR]-E-[QR]; sequence LERERLERERMERERLERERLERERLERERLEQEQLERERQERER. Over residues 221-264 the composition is skewed to basic and acidic residues; the sequence is RLDRERQERQERERLERLERERQERERQEQLEREQLEWERERRI. The disordered stretch occupies residues 221–379; that stretch reads RLDRERQERQ…PPLPASGFFL (159 aa). Ser265 bears the Phosphoserine; by PKA mark. A compositionally biased stretch (polar residues) spans 275-305; that stretch reads TPLNSVLGDSSASEPGLQAASQPAETPSQQG. 2 stretches are compositionally biased toward pro residues: residues 311–323 and 330–373; these read LAPP…PPGP and LPPP…PPLP. Positions 391-411 are EVH2 block A; it reads GLAAAIAGAKLRKVSRMEDTS. Residues 391 to 588 are EVH2; the sequence is GLAAAIAGAK…DAIRQELSKS (198 aa). Residues 400–403 carry the KLKR motif; that stretch reads KLRK. Positions 405–549 are disordered; the sequence is SRMEDTSFPS…LSQPSANGVQ (145 aa). The span at 432 to 443 shows a compositional bias: gly residues; the sequence is RGNGPLPLGGSG. Residues 442-459 are EVH2 block B; the sequence is SGLMEEMSALLARRRRIA. Position 465 is a phosphothreonine (Ile465). Phosphoserine is present on residues Glu471 and Glu475. 2 stretches are compositionally biased toward polar residues: residues 479 to 491 and 499 to 509; these read PVTS…STPE and RTNTMNGSKSP. The residue at position 502 (Thr502) is a Phosphothreonine. Phosphoserine occurs at positions 506, 508, and 512. Residues 538–549 show a composition bias toward polar residues; sequence TPLSQPSANGVQ. An EVH2 block C region spans residues 554 to 588; it reads DYDRLKQDILDEMRKELTKLKEELIDAIRQELSKS. Positions 557–587 form a coiled coil; that stretch reads RLKQDILDEMRKELTKLKEELIDAIRQELSK.

It belongs to the Ena/VASP family. In terms of assembly, homotetramer. Interacts with APBB1IP, APBB1, PFN1 and ROBO4. Isoforms, containing the polyproline-rich regions with PPLP motifs, bind the WW domain of APBB1IP. Isoforms, containing the PPSY motif, bind, in vitro, to the WW2 and WW3 domains of NEDD4 and to the WW1 domain of YAP1. Binds the SH3 domain of BAIAP2-alpha but only after the autoinhibitory region of BAIAP2-alpha has been blocked by interaction with CDC42. Interacts, via the EVH1/WH1 domain, with the Pro-rich domains from VCL, ZYX and Listeria monocytogenes actA and with TES (via LIM domains). The TES LIM domain and the Pro-rich domains from VCL or ZYX compete for the same binding site. Interaction with ZYX is important for targeting ENAH to focal adhesions and enhances production of actin-rich structures at the apical surface of cells. Interacts, through the Pro-rich region, with the C-terminal SH3 domain of DNMPB. Binds GPHN. Interacts with FAT1 (via EVH1 domains). Heterotrimer with TES and ACTL7A. Interacts with PRPF40A. NTN1-induced PKA phosphorylation on Ser-265 directly parallels the formation of filopodial protrusions. Expressed in myoepithelia of parotid, breast, bronchial glands and sweat glands. Expressed in colon-rectum muscolaris mucosae epithelium, pancreas acinar ductal epithelium, endometrium epithelium, prostate fibromuscolar stroma and placenta vascular media. Overexpressed in a majority of breast cancer cell lines and primary breast tumor lesions.

The protein resides in the cytoplasm. Its subcellular location is the cytoskeleton. It is found in the cell projection. The protein localises to the lamellipodium. It localises to the filopodium. The protein resides in the synapse. Its subcellular location is the cell junction. It is found in the focal adhesion. Its function is as follows. Ena/VASP proteins are actin-associated proteins involved in a range of processes dependent on cytoskeleton remodeling and cell polarity such as axon guidance and lamellipodial and filopodial dynamics in migrating cells. ENAH induces the formation of F-actin rich outgrowths in fibroblasts. Acts synergistically with BAIAP2-alpha and downstream of NTN1 to promote filipodia formation. This chain is Protein enabled homolog (ENAH), found in Homo sapiens (Human).